The sequence spans 346 residues: GTPase Obg (346 aa).

The Obg domain maps to 1 to 159; sequence MRFVDEVTFV…RELRLELQLL (159 aa). The segment at 128–148 is disordered; it reads LHFKSSTNRAPRQSTEGTAGE. A compositionally biased stretch (polar residues) spans 130–144; that stretch reads FKSSTNRAPRQSTEG. Positions 160–335 constitute an OBG-type G domain; sequence ADVGLLGMPN…LCGDIMNDLE (176 aa). GTP is bound by residues 166-173, 191-195, 213-216, 285-288, and 316-318; these read GMPNVGKS, FTTLY, DIPG, NRLD, and SGL. The Mg(2+) site is built by serine 173 and threonine 193.

It belongs to the TRAFAC class OBG-HflX-like GTPase superfamily. OBG GTPase family. In terms of assembly, monomer. Mg(2+) is required as a cofactor.

Its subcellular location is the cytoplasm. Functionally, an essential GTPase which binds GTP, GDP and possibly (p)ppGpp with moderate affinity, with high nucleotide exchange rates and a fairly low GTP hydrolysis rate. Plays a role in control of the cell cycle, stress response, ribosome biogenesis and in those bacteria that undergo differentiation, in morphogenesis control. In Halorhodospira halophila (strain DSM 244 / SL1) (Ectothiorhodospira halophila (strain DSM 244 / SL1)), this protein is GTPase Obg.